The chain runs to 66 residues: Large ribosomal subunit protein bL35 (66 aa).

It belongs to the bacterial ribosomal protein bL35 family.

This Synechococcus sp. (strain JA-2-3B'a(2-13)) (Cyanobacteria bacterium Yellowstone B-Prime) protein is Large ribosomal subunit protein bL35.